A 92-amino-acid chain; its full sequence is uncharacterized protein (92 aa).

A signal peptide spans 1-23 (MNPAIVVIIVLLVAALLIWACKA).

This is an uncharacterized protein from Acheta domesticus (House cricket).